We begin with the raw amino-acid sequence, 883 residues long: Putative GTP diphosphokinase RSH1, chloroplastic (883 aa).

Residues 1–55 (MTSASSMSVSVECVNICNLTKGDGNARSDCSALSCAWKAPRALTGFLASTAHPPV) constitute a chloroplast transit peptide. The HD domain occupies 172–279 (FIIHPVAVAR…VKLADRLHNM (108 aa)). The TGS domain occupies 562 to 625 (LGSRVFVFTP…ENAEVVEIVT (64 aa)). The segment covering 710–726 (QSQDKSRDTTPAPQNGS) has biased composition (polar residues). Residues 710–746 (QSQDKSRDTTPAPQNGSVWAPKVNGKHNKAIKNSSSD) form a disordered region. The 72-residue stretch at 796–867 (WLCVVSMDRK…LVLGVLGWSS (72 aa)) folds into the ACT domain.

Belongs to the RelA/SpoT family. Interacts with RPP5.

It is found in the plastid. The protein resides in the chloroplast. It catalyses the reaction GTP + ATP = guanosine 3'-diphosphate 5'-triphosphate + AMP. May be involved in a rapid plant ppGpp (guanosine 3'-diphosphate 5'-diphosphate)-mediated response to pathogens and other stresses. This is Putative GTP diphosphokinase RSH1, chloroplastic (RSH1) from Arabidopsis thaliana (Mouse-ear cress).